The primary structure comprises 156 residues: Small ribosomal subunit protein uS7 (156 aa).

It belongs to the universal ribosomal protein uS7 family. As to quaternary structure, part of the 30S ribosomal subunit. Contacts proteins S9 and S11.

In terms of biological role, one of the primary rRNA binding proteins, it binds directly to 16S rRNA where it nucleates assembly of the head domain of the 30S subunit. Is located at the subunit interface close to the decoding center, probably blocks exit of the E-site tRNA. The polypeptide is Small ribosomal subunit protein uS7 (Syntrophomonas wolfei subsp. wolfei (strain DSM 2245B / Goettingen)).